The primary structure comprises 667 residues: DNA ligase (667 aa).

NAD(+)-binding positions include 34–38 (DYEFD), 83–84 (SL), and E117. Catalysis depends on K119, which acts as the N6-AMP-lysine intermediate. Residues R140, E176, K289, and K313 each coordinate NAD(+). Residues C407, C410, C425, and C431 each coordinate Zn(2+). The BRCT domain occupies 591 to 667 (QVNRNFEGMS…ISEDEFMGMM (77 aa)).

It belongs to the NAD-dependent DNA ligase family. LigA subfamily. Requires Mg(2+) as cofactor. The cofactor is Mn(2+).

It catalyses the reaction NAD(+) + (deoxyribonucleotide)n-3'-hydroxyl + 5'-phospho-(deoxyribonucleotide)m = (deoxyribonucleotide)n+m + AMP + beta-nicotinamide D-nucleotide.. Its function is as follows. DNA ligase that catalyzes the formation of phosphodiester linkages between 5'-phosphoryl and 3'-hydroxyl groups in double-stranded DNA using NAD as a coenzyme and as the energy source for the reaction. It is essential for DNA replication and repair of damaged DNA. The chain is DNA ligase from Chlorobium chlorochromatii (strain CaD3).